Here is a 269-residue protein sequence, read N- to C-terminus: Formamidopyrimidine-DNA glycosylase (269 aa).

The active-site Schiff-base intermediate with DNA is the Pro-2. The Proton donor role is filled by Glu-3. Lys-57 serves as the catalytic Proton donor; for beta-elimination activity. Residues His-90, Arg-109, and Lys-150 each contribute to the DNA site. An FPG-type zinc finger spans residues 235–269; sequence QVYGKGGKPCPRCDNPLSEMKIGQRASVFCSECQK. The Proton donor; for delta-elimination activity role is filled by Arg-259.

The protein belongs to the FPG family. As to quaternary structure, monomer. Zn(2+) is required as a cofactor.

The catalysed reaction is Hydrolysis of DNA containing ring-opened 7-methylguanine residues, releasing 2,6-diamino-4-hydroxy-5-(N-methyl)formamidopyrimidine.. It catalyses the reaction 2'-deoxyribonucleotide-(2'-deoxyribose 5'-phosphate)-2'-deoxyribonucleotide-DNA = a 3'-end 2'-deoxyribonucleotide-(2,3-dehydro-2,3-deoxyribose 5'-phosphate)-DNA + a 5'-end 5'-phospho-2'-deoxyribonucleoside-DNA + H(+). Functionally, involved in base excision repair of DNA damaged by oxidation or by mutagenic agents. Acts as a DNA glycosylase that recognizes and removes damaged bases. Has a preference for oxidized purines, such as 7,8-dihydro-8-oxoguanine (8-oxoG). Has AP (apurinic/apyrimidinic) lyase activity and introduces nicks in the DNA strand. Cleaves the DNA backbone by beta-delta elimination to generate a single-strand break at the site of the removed base with both 3'- and 5'-phosphates. The sequence is that of Formamidopyrimidine-DNA glycosylase from Photobacterium profundum (strain SS9).